Here is a 456-residue protein sequence, read N- to C-terminus: Mitochondrial import inner membrane translocase subunit TIM50 (456 aa).

The transit peptide at 1–22 (MSLSKLSQKCFSRHHARTFIRF) directs the protein to the mitochondrion. Residues 23-171 (SSSDFQSLLG…RRKRMERNTR (149 aa)) lie on the Mitochondrial matrix side of the membrane. 2 disordered regions span residues 101–120 (ETEK…AIDE) and 132–165 (EEAA…RRKR). The segment covering 137–153 (SKTSAPSGSSGDNNDQP) has biased composition (polar residues). A helical transmembrane segment spans residues 172–192 (IGGYVLLGGSVIGFISFCFYY). Topologically, residues 193–456 (GRAQRDEAGN…LFGFRRHASA (264 aa)) are mitochondrial intermembrane. An FCP1 homology domain is found at 247–391 (YLQPKYTIVI…VDLAELLKTI (145 aa)).

Belongs to the TIM50 family. In terms of assembly, component of the TIM23 complex at least composed of tim-23, tim-17 and tim-50.

The protein localises to the mitochondrion inner membrane. Functionally, essential component of the TIM23 complex, a complex that mediates the translocation of transit peptide-containing proteins across the mitochondrial inner membrane. In Caenorhabditis briggsae, this protein is Mitochondrial import inner membrane translocase subunit TIM50 (scpl-4).